The following is a 228-amino-acid chain: Ras-related protein Rab-32D (228 aa).

Residue 16–23 (GDVNVGKT) participates in GTP binding. The Effector region signature appears at 38–46 (YKSTIGADF). Residues 64–68 (DTAGQ) and 128–131 (NKSD) each bind GTP. The tract at residues 183–228 (SDNEQFNDSPDEETSSITLLGTSKKHDNTNPNKPSTSSPSSCFNCK) is disordered. The span at 185–196 (NEQFNDSPDEET) shows a compositional bias: acidic residues. A compositionally biased stretch (low complexity) spans 211–228 (TNPNKPSTSSPSSCFNCK). Cys224 carries the S-geranylgeranyl cysteine lipid modification.

The protein belongs to the small GTPase superfamily. Rab family.

The polypeptide is Ras-related protein Rab-32D (rab32D) (Dictyostelium discoideum (Social amoeba)).